A 261-amino-acid chain; its full sequence is Immediate-early protein IE-0 (261 aa).

The segment at 212-257 adopts an RING-type zinc-finger fold; it reads CNVCKEISTDERFLKPKECCEYAICNACCVNMWKTATTHAKCPACR.

In terms of assembly, interacts with proteins C42 and FP25. Interacts with host beta-tubulin. Interacts with Ac66 and vUb.

The protein localises to the host nucleus. The protein resides in the host cytoplasm. It localises to the virion. Its function is as follows. Putative viral E3 ligase that plays an essential regulatory role in both viral DNA replication and transcriptional transactivation. The role in transcription has been shown to include activation of gene expression from early viral promoters. Also promotes the efficient egress of nucleocapsids from the host nucleus. May act as an E3 ligase that promotes ubiquitination of nucleocapsids proteins by vUbi and subsequent viral egress for the host nucleus. The sequence is that of Immediate-early protein IE-0 (IE0) from Lepidoptera (butterflies and moths).